Here is a 164-residue protein sequence, read N- to C-terminus: Protein SprT (164 aa).

The SprT-like domain maps to 14-156 (QQAETFFKRT…LCRRCREPLV (143 aa)). A Zn(2+)-binding site is contributed by His69. The active site involves Glu70. His73 is a Zn(2+) binding site.

Belongs to the SprT family. Zn(2+) is required as a cofactor.

It is found in the cytoplasm. The chain is Protein SprT from Pseudomonas savastanoi pv. phaseolicola (strain 1448A / Race 6) (Pseudomonas syringae pv. phaseolicola (strain 1448A / Race 6)).